The following is a 512-amino-acid chain: 2-isopropylmalate synthase (512 aa).

One can recognise a Pyruvate carboxyltransferase domain in the interval 4-266; the sequence is IQFFDTTLRD…ETNIVLNQFK (263 aa). Mn(2+) is bound by residues Asp-13, His-201, His-203, and Asn-237. The regulatory domain stretch occupies residues 390 to 512; sequence ELKHLQVQYV…TKQVDFEEVK (123 aa).

This sequence belongs to the alpha-IPM synthase/homocitrate synthase family. LeuA type 1 subfamily. In terms of assembly, homodimer. Requires Mn(2+) as cofactor.

It is found in the cytoplasm. The enzyme catalyses 3-methyl-2-oxobutanoate + acetyl-CoA + H2O = (2S)-2-isopropylmalate + CoA + H(+). The protein operates within amino-acid biosynthesis; L-leucine biosynthesis; L-leucine from 3-methyl-2-oxobutanoate: step 1/4. Functionally, catalyzes the condensation of the acetyl group of acetyl-CoA with 3-methyl-2-oxobutanoate (2-ketoisovalerate) to form 3-carboxy-3-hydroxy-4-methylpentanoate (2-isopropylmalate). This Listeria welshimeri serovar 6b (strain ATCC 35897 / DSM 20650 / CCUG 15529 / CIP 8149 / NCTC 11857 / SLCC 5334 / V8) protein is 2-isopropylmalate synthase.